A 693-amino-acid polypeptide reads, in one-letter code: Phenoloxidase subunit 2 (693 aa).

Positions 1 to 51 are excised as a propeptide; the sequence is MADVFESLELLFDRPNEPLITPKGENNSVFQLTEQFLTEDYANNGIELNNR. N-linked (GlcNAc...) asparagine glycans are attached at residues Asn-26 and Asn-64. Positions 213, 217, and 243 each coordinate Cu cation. Residue Glu-351 is the Proton acceptor of the active site. Positions 366, 370, and 406 each coordinate Cu cation. Residues Asn-462 and Asn-494 are each glycosylated (N-linked (GlcNAc...) asparagine). 2 disulfide bridges follow: Cys-583–Cys-627 and Cys-585–Cys-634. Asn-680 is a glycosylation site (N-linked (GlcNAc...) asparagine).

In terms of assembly, heterodimer. Requires Cu(2+) as cofactor. The N-terminus is blocked. Synthesized by hemocytes and released into the hemolymph plasma.

Its subcellular location is the secreted. The enzyme catalyses 2 L-dopa + O2 = 2 L-dopaquinone + 2 H2O. It catalyses the reaction L-tyrosine + O2 = L-dopaquinone + H2O. This is a copper-containing oxidase that functions in the formation of pigments such as melanins and other polyphenolic compounds. Catalyzes the rate-limiting conversions of tyrosine to DOPA, DOPA to DOPA-quinone and possibly 5,6 dihydroxyindole to indole-5'6 quinone. In Bombyx mori (Silk moth), this protein is Phenoloxidase subunit 2.